The sequence spans 95 residues: Large ribosomal subunit protein bL25 (95 aa).

Belongs to the bacterial ribosomal protein bL25 family. Part of the 50S ribosomal subunit; part of the 5S rRNA/L5/L18/L25 subcomplex. Contacts the 5S rRNA. Binds to the 5S rRNA independently of L5 and L18.

In terms of biological role, this is one of the proteins that binds to the 5S RNA in the ribosome where it forms part of the central protuberance. The chain is Large ribosomal subunit protein bL25 from Shewanella loihica (strain ATCC BAA-1088 / PV-4).